We begin with the raw amino-acid sequence, 260 residues long: UPF0246 protein Bxeno_A1262 (260 aa).

This sequence belongs to the UPF0246 family.

This Paraburkholderia xenovorans (strain LB400) protein is UPF0246 protein Bxeno_A1262.